The primary structure comprises 962 residues: Glycine dehydrogenase (decarboxylating) (962 aa).

K709 carries the N6-(pyridoxal phosphate)lysine modification.

Belongs to the GcvP family. As to quaternary structure, the glycine cleavage system is composed of four proteins: P, T, L and H. The cofactor is pyridoxal 5'-phosphate.

It carries out the reaction N(6)-[(R)-lipoyl]-L-lysyl-[glycine-cleavage complex H protein] + glycine + H(+) = N(6)-[(R)-S(8)-aminomethyldihydrolipoyl]-L-lysyl-[glycine-cleavage complex H protein] + CO2. The glycine cleavage system catalyzes the degradation of glycine. The P protein binds the alpha-amino group of glycine through its pyridoxal phosphate cofactor; CO(2) is released and the remaining methylamine moiety is then transferred to the lipoamide cofactor of the H protein. This is Glycine dehydrogenase (decarboxylating) from Shewanella baltica (strain OS155 / ATCC BAA-1091).